Reading from the N-terminus, the 347-residue chain is MKQTIILLYGGRSAEREVSVLSAESVMRAVDYDRFTVKTFFISQSGDFIKTQEFSHAPGQEDRLMTNETIDWDKKVAPSAIYEEGAVVFPVLHGPMGEDGSVQGFLEVLKMPYVGCNILSSSLAMDKITTKRVLESAGIAQVPYVAIVEGDDVTAKIAEVEEKLAYPVFTKPSNMGSSVGISKSENQEELRQALKLAFRYDSRVLVEQGVNAREIEVGLLGNYDVKSTLPGEVVKDVAFYDYDAKYIDNKVTMDIPAKISDDVVAVMRQNAETAFRAIGGLGLSRCDFFYTDKGEIFLNELNTMPGFTQWSMYPLLWENMGISYPELIERLVDLAKESFDKREAHLI.

One can recognise an ATP-grasp domain in the interval Lys131–Asp333. ATP is bound at residue Glu161 to Glu216. Residues Asp287, Glu300, and Asn302 each contribute to the Mg(2+) site.

This sequence belongs to the D-alanine--D-alanine ligase family. Requires Mg(2+) as cofactor. Mn(2+) serves as cofactor.

It localises to the cytoplasm. The catalysed reaction is 2 D-alanine + ATP = D-alanyl-D-alanine + ADP + phosphate + H(+). The protein operates within cell wall biogenesis; peptidoglycan biosynthesis. Its function is as follows. Cell wall formation. In Streptococcus pneumoniae (strain ATCC BAA-255 / R6), this protein is D-alanine--D-alanine ligase.